The primary structure comprises 37 residues: Beta-2-microglobulin (37 aa).

The Ig-like C1-type domain occupies 11 to 37 (GKEDVLICHVSNFHPPDITITLLKNGE).

This sequence belongs to the beta-2-microglobulin family. Heterodimer of an alpha chain and a beta chain. Beta-2-microglobulin is the beta-chain of major histocompatibility complex class I molecules.

It is found in the secreted. In terms of biological role, component of the class I major histocompatibility complex (MHC). Involved in the presentation of peptide antigens to the immune system. In Oreochromis niloticus (Nile tilapia), this protein is Beta-2-microglobulin (b2m).